The sequence spans 431 residues: Tol-Pal system protein TolB (431 aa).

A signal peptide spans 1–26; it reads MSLMTKLGFRALVASCLITAGSAANA. Positions 406-431 are disordered; sequence DGSAPPQILSVQGGSVREPSWGPFMQ.

This sequence belongs to the TolB family. The Tol-Pal system is composed of five core proteins: the inner membrane proteins TolA, TolQ and TolR, the periplasmic protein TolB and the outer membrane protein Pal. They form a network linking the inner and outer membranes and the peptidoglycan layer.

The protein localises to the periplasm. In terms of biological role, part of the Tol-Pal system, which plays a role in outer membrane invagination during cell division and is important for maintaining outer membrane integrity. The chain is Tol-Pal system protein TolB from Burkholderia cenocepacia (strain HI2424).